Consider the following 633-residue polypeptide: Carbon catabolite-derepressing protein kinase (633 aa).

Over residues methionine 1–serine 16 the composition is skewed to low complexity. A disordered region spans residues methionine 1–leucine 46. The segment covering serine 17–histidine 32 has biased composition (basic residues). The Protein kinase domain maps to tyrosine 55–phenylalanine 306. Residues leucine 61–valine 69 and lysine 84 contribute to the ATP site. Aspartate 177 acts as the Proton acceptor in catalysis. At threonine 210 the chain carries Phosphothreonine; by autocatalysis. The segment at tyrosine 313–leucine 392 is auto-inhibitory domain (AID). Positions proline 317–aspartate 345 are disordered. The segment covering leucine 319 to serine 337 has biased composition (basic and acidic residues). Residues leucine 348 to asparagine 389 enclose the UBA domain. The tract at residues phenylalanine 409–alanine 434 is disordered. Residue serine 413 is modified to Phosphoserine. Lysine 461 is covalently cross-linked (Glycyl lysine isopeptide (Lys-Gly) (interchain with G-Cter in ubiquitin)). Residue serine 487 is modified to Phosphoserine. Residue lysine 549 forms a Glycyl lysine isopeptide (Lys-Gly) (interchain with G-Cter in SUMO) linkage. Serine 632 carries the phosphoserine modification.

This sequence belongs to the protein kinase superfamily. CAMK Ser/Thr protein kinase family. SNF1 subfamily. Component of the AMP-activated protein kinase complex also known as the SNF1 kinase complex (Snf1c), a heterotrimeric complex composed of an alpha subunit (SNF1), a regulatory subunit beta (GAL83 and substoichiometric alternate beta subunits SIP1 and SIP2), and a regulatory subunit gamma (SNF4). Interacts with the transcriptional activator SIP4. Interacts with SAK1. Interacts with CTK1: Interacts with adenylate cyclase CYR1. In terms of processing, phosphorylation at Thr-210 in response to glucose limitation leads to activation of kinase activity. ADP, but not AMP, protects the enzyme from dephosphorylation at Thr-210 by GLC7. Post-translationally, sumoylation by the SUMO (E3) ligase MMS21 leads to inhibition by interaction of SUMO attached to Lys-549 with a SUMO-interacting sequence motif located near the active site of SNF1, and by targeting SNF1 for glucose-induced destruction via the SLX5-SLX8 (SUMO-directed) ubiquitin ligase.

The protein localises to the cytoplasm. It localises to the nucleus. Its subcellular location is the nucleus membrane. It carries out the reaction L-seryl-[protein] + ATP = O-phospho-L-seryl-[protein] + ADP + H(+). It catalyses the reaction L-threonyl-[protein] + ATP = O-phospho-L-threonyl-[protein] + ADP + H(+). Its activity is regulated as follows. The kinase activity is positively regulated by SNF4 via sequestration of the SNF1 auto-inhibitory domain (AID). Serine/threonine protein kinase essential for release from glucose repression. Catalytic subunit of the AMP-activated protein kinase complex also known as the SNF1 kinase complex (Snf1c), a central regulator of cellular energy homeostasis, which, in response to a fall in intracellular ATP levels, activates energy-producing pathways and inhibits energy-consuming processes. The complex phosphorylates histone H3 to form H3S10ph, which promotes H3K14ac formation, leading to transcriptional activation through TBP recruitment to the promoters. The complex also negatively regulates the HOG1 MAPK pathway in ER stress response including unfolded protein response (UPR). Under nutrient/energy depletion, the complex phosphorylates and activates PAS kinase PSK1 which in turn activates PBS1, leading to the inhibition of the TORC1 signaling pathway. SNF1 also interacts and phosphorylates adenylate cyclase CYR1 and negatively regulates the protein kinase A signaling pathway. Also phosphorylates and regulates the transcriptional activator CAT8. The protein is Carbon catabolite-derepressing protein kinase of Saccharomyces cerevisiae (strain ATCC 204508 / S288c) (Baker's yeast).